Reading from the N-terminus, the 192-residue chain is uncharacterized protein (192 aa).

This is an uncharacterized protein from Methanocaldococcus jannaschii (strain ATCC 43067 / DSM 2661 / JAL-1 / JCM 10045 / NBRC 100440) (Methanococcus jannaschii).